The primary structure comprises 356 residues: RGARGETEGRWSREAPGAWACGVERGGCQHECKGSAGASNCLCPADAALQADGRSCGLPAEHPCHQLCEHFCHLHGLGNYTCICEAGYQLAADQHRCEDVDDCAQLPSPCPQRCVNTEGGFQCHCDTGYELVDGECVDPVDPCFDNNCEYQCQPVGRSEHKCICAEGFAPVPGAPHKCQMFCNQTSCPADCDPHYPTICRCPEGYIIDEGSTCTDINECDTNICPGQCHNLPGTYECICGPDSALSGQIGIDCDPTQVNEERGTPEDYGGSGEPPVSPTPGATARPSPAPAGPLHSGVLVGISIASLSLVVALLALLCHLRKKQGASRGELEYKCGVPAKELMLQQVKTERTPQKL.

The Extracellular segment spans residues 1 to 296 (RGARGETEGR…SPAPAGPLHS (296 aa)). EGF-like domains lie at 17–57 (GAWA…RSCG) and 60–98 (AEHPCHQLCEHFCHLHGLGNYTCICEAGYQLAADQHRCE). Cystine bridges form between Cys21-Cys32, Cys28-Cys41, Cys43-Cys56, Cys64-Cys72, Cys68-Cys82, Cys84-Cys97, Cys103-Cys114, Cys110-Cys123, Cys125-Cys136, Cys143-Cys152, Cys148-Cys162, Cys164-Cys178, Cys182-Cys191, Cys187-Cys199, Cys201-Cys213, Cys219-Cys228, Cys224-Cys237, and Cys239-Cys253. The 39-residue stretch at 99 to 137 (DVDDCAQLPSPCPQRCVNTEGGFQCHCDTGYELVDGECV) folds into the EGF-like 3; calcium-binding domain. EGF-like domains are found at residues 139-179 (PVDP…HKCQ) and 178-214 (CQMFCNQTSCPADCDPHYPTICRCPEGYIIDEGSTCT). Residues 215-254 (DINECDTNICPGQCHNLPGTYECICGPDSALSGQIGIDCD) enclose the EGF-like 6; calcium-binding domain. The segment at 255–290 (PTQVNEERGTPEDYGGSGEPPVSPTPGATARPSPAP) is disordered. O-linked (Xyl...) (chondroitin sulfate) serine glycosylation is present at Ser271. The chain crosses the membrane as a helical span at residues 297–320 (GVLVGISIASLSLVVALLALLCHL). The Cytoplasmic portion of the chain corresponds to 321-356 (RKKQGASRGELEYKCGVPAKELMLQQVKTERTPQKL).

In terms of assembly, interacts with ITGAL, ITGAM and ITGB2. Interacts with thrombin/F2; this interaction switches the specificity of thrombin from a procoagulant to an anticoagulant and antifibrinolytic protease. Interacts with ANGP1 and ANGP2; these interactions significantly inhibit the generation of activated PC and TAFIa/CPB2 by the thrombin/thrombomodulin complex. Interacts with PF4; this interaction enhances generation of activated protein C. Interacts with HMGB1; this interaction inhibits HMGB1 inflammatory activity. As to expression, endothelial cells are unique in synthesizing thrombomodulin.

Its subcellular location is the membrane. Endothelial cell receptor that plays a critical role in regulating several physiological processes including hemostasis, coagulation, fibrinolysis, inflammation, and angiogenesis. Acts as a cofactor for thrombin activation of protein C/PROC on the surface of vascular endothelial cells leading to initiation of the activated protein C anticoagulant pathway. Also accelerates the activation of the plasma carboxypeptidase B2/CPB2, which catalyzes removal of C-terminal basic amino acids from its substrates including kinins or anaphylatoxins leading to fibrinolysis inhibition. Plays critical protective roles in changing the cleavage specificity of protease-activated receptor 1/PAR1, inhibiting endothelial cell permeability and inflammation. Suppresses inflammation distinctly from its anticoagulant cofactor activity by sequestering HMGB1 thereby preventing it from engaging cellular receptors such as RAGE and contributing to the inflammatory response. The protein is Thrombomodulin (THBD) of Bos taurus (Bovine).